The following is a 220-amino-acid chain: Adenylate kinase (220 aa).

10–15 contacts ATP; it reads GAGKGT. Positions 30 to 59 are NMP; it reads STGDMLRAAVKAGSPLGVEAKGYMDAGKLV. AMP is bound by residues Thr31, Arg36, 57–59, 85–88, and Gln92; these read KLV and GFPR. Residues 122 to 150 are disordered; sequence GRRTHPASGRTYHVKFNPPKVEGKDDVTG. Residues 122 to 159 are LID; sequence GRRTHPASGRTYHVKFNPPKVEGKDDVTGEPLIQRDDD. Residues Arg123 and 132 to 133 contribute to the ATP site; that span reads TY. AMP is bound by residues Arg156 and Arg167. Gly206 is an ATP binding site.

This sequence belongs to the adenylate kinase family. As to quaternary structure, monomer.

The protein resides in the cytoplasm. The catalysed reaction is AMP + ATP = 2 ADP. It participates in purine metabolism; AMP biosynthesis via salvage pathway; AMP from ADP: step 1/1. Its function is as follows. Catalyzes the reversible transfer of the terminal phosphate group between ATP and AMP. Plays an important role in cellular energy homeostasis and in adenine nucleotide metabolism. The chain is Adenylate kinase from Burkholderia ambifaria (strain MC40-6).